A 206-amino-acid chain; its full sequence is RNA pyrophosphohydrolase (206 aa).

The Nudix hydrolase domain occupies 6–150 (GYRPNVGIVI…KRDVYRKVMK (145 aa)). The Nudix box signature appears at 38–59 (GGINEGENIETAMYRELYEEVG). The segment covering 162-191 (KPETVEKPRVERTEKRDFQKRDNQKREFRK) has biased composition (basic and acidic residues). Residues 162–206 (KPETVEKPRVERTEKRDFQKRDNQKREFRKSARMWNNSHQKGKAQ) are disordered.

The protein belongs to the Nudix hydrolase family. RppH subfamily. It depends on a divalent metal cation as a cofactor.

In terms of biological role, accelerates the degradation of transcripts by removing pyrophosphate from the 5'-end of triphosphorylated RNA, leading to a more labile monophosphorylated state that can stimulate subsequent ribonuclease cleavage. This chain is RNA pyrophosphohydrolase, found in Actinobacillus pleuropneumoniae serotype 7 (strain AP76).